The following is a 61-amino-acid chain: Large ribosomal subunit protein uL30 (61 aa).

This sequence belongs to the universal ribosomal protein uL30 family. As to quaternary structure, part of the 50S ribosomal subunit.

This is Large ribosomal subunit protein uL30 from Corynebacterium efficiens (strain DSM 44549 / YS-314 / AJ 12310 / JCM 11189 / NBRC 100395).